The sequence spans 81 residues: Cytotoxin 4a (81 aa).

Residues 1 to 21 (MKTLLLTLVVVTIVCLDLGYT) form the signal peptide. 4 disulfide bridges follow: C24–C42, C35–C59, C63–C74, and C75–C80.

Belongs to the three-finger toxin family. Short-chain subfamily. Type IA cytotoxin sub-subfamily. In terms of assembly, monomer in solution; Homodimer and oligomer in the presence of negatively charged lipids forming a pore with a size ranging between 20 and 30 Angstroms. Expressed by the venom gland.

It localises to the secreted. The protein resides in the target cell membrane. In terms of biological role, shows cytolytic activity on many different cells by forming pore in lipid membranes. In vivo, increases heart rate or kills the animal by cardiac arrest. In addition, it binds to heparin with high affinity, interacts with Kv channel-interacting protein 1 (KCNIP1) in a calcium-independent manner, and binds to integrin alpha-V/beta-3 (ITGAV/ITGB3) with moderate affinity. The chain is Cytotoxin 4a from Naja sputatrix (Malayan spitting cobra).